The following is a 384-amino-acid chain: Carbamoyl phosphate synthase small chain (384 aa).

Residues 1–189 (MSKSALLVLE…GLPEAKDDSE (189 aa)) form a CPSase region. Positions 47, 241, and 243 each coordinate L-glutamine. The region spanning 193–380 (HVVAYDFGAK…IELIKLSVNE (188 aa)) is the Glutamine amidotransferase type-1 domain. Cys-269 (nucleophile) is an active-site residue. Leu-270, Gln-273, Asn-311, Gly-313, and Phe-314 together coordinate L-glutamine. Active-site residues include His-353 and Glu-355.

The protein belongs to the CarA family. As to quaternary structure, composed of two chains; the small (or glutamine) chain promotes the hydrolysis of glutamine to ammonia, which is used by the large (or ammonia) chain to synthesize carbamoyl phosphate. Tetramer of heterodimers (alpha,beta)4.

It carries out the reaction hydrogencarbonate + L-glutamine + 2 ATP + H2O = carbamoyl phosphate + L-glutamate + 2 ADP + phosphate + 2 H(+). It catalyses the reaction L-glutamine + H2O = L-glutamate + NH4(+). The protein operates within amino-acid biosynthesis; L-arginine biosynthesis; carbamoyl phosphate from bicarbonate: step 1/1. It functions in the pathway pyrimidine metabolism; UMP biosynthesis via de novo pathway; (S)-dihydroorotate from bicarbonate: step 1/3. Its function is as follows. Small subunit of the glutamine-dependent carbamoyl phosphate synthetase (CPSase). CPSase catalyzes the formation of carbamoyl phosphate from the ammonia moiety of glutamine, carbonate, and phosphate donated by ATP, constituting the first step of 2 biosynthetic pathways, one leading to arginine and/or urea and the other to pyrimidine nucleotides. The small subunit (glutamine amidotransferase) binds and cleaves glutamine to supply the large subunit with the substrate ammonia. The sequence is that of Carbamoyl phosphate synthase small chain from Photobacterium profundum (strain SS9).